Here is a 386-residue protein sequence, read N- to C-terminus: D-galactosamine-6-phosphate deaminase AgaS (386 aa).

2 SIS domains span residues 59–217 (LTPI…CIEM) and 222–366 (LTER…PDNP).

This sequence belongs to the SIS family. AgaS subfamily.

It is found in the cytoplasm. The enzyme catalyses D-galactosamine 6-phosphate + H2O = D-tagatopyranose 1-phosphate + NH4(+). It catalyses the reaction alpha-D-glucosamine 6-phosphate + H2O = beta-D-fructose 6-phosphate + NH4(+). Involved in the pathway of N-acetyl-D-galactosamine degradation. Catalyzes the conversion of D-galactosamine 6-phosphate (GalN-6-P) to D-tagatofuranose 6-phosphate (Tag-6-P). It can also catalyze the conversion of D-glucosamine 6-phosphate. The sequence is that of D-galactosamine-6-phosphate deaminase AgaS from Shewanella sp. (strain ANA-3).